Here is a 266-residue protein sequence, read N- to C-terminus: Gasdermin bGSDM (266 aa).

The next 4 beta stranded transmembrane spans lie at 65–81 (FSGQ…GADL), 93–113 (EDKL…FAYE), 162–181 (QFTV…EAAV), and 187–203 (AHAS…SLQT). The C-terminal region stretch occupies residues 248-266 (GEEDFSVQPLQAPSGLLKL).

Belongs to the bacterial gasdermin family. Monomer. As to quaternary structure, forms large, homooligomeric ring-shaped pores when inserted in membranes.

The protein resides in the cytoplasm. It is found in the cell membrane. With respect to regulation, the full-length protein before cleavage is inactive: intramolecular interactions between the N-terminal domain and the C-terminal region mediate autoinhibition. The pyroptosis-like-inducing activity is carried by the released N-terminal domain (Gasdermin bGSDM, N-terminus). Precursor of a pore-forming protein involved in defense against bacteriophages. Cleavage of this precursor by its dedicated protease releases the active moiety (gasdermin bGSDM, N-terminus) which inserts into membranes, forming pores and triggering cell death. Expression of bGSDM and the neighboring protease gene (Ga0307981_100051430) is highly toxic in E.coli. Its function is as follows. Pore-forming protein that causes membrane permeabilization via a pyroptosis-like activity. This is the active form which makes ring-like pores with an interior pore diameter of 130-190 Angstroms, when integrated in liposomes. The sequence is that of Gasdermin bGSDM from Unknown prokaryotic organism.